Here is a 610-residue protein sequence, read N- to C-terminus: MPHNNYLYQTRDIKFQIKEWLDINKILSLDAYKDYYGADDFDAICDVNFKICRDVICPANKESDEIGMKHVGGNEKAVISPDVFKTVYNTVIEAGMGPQFGDRQVEGRMPLYWYAPILEMQTGASPAMVMLWCLTQGATTVLQYNLSKELQERFLPKMYSGEWGGSMCLTEPGAGSEVGAVSTKCFPTDTPGLWKVKGQKCFITTGDWDGVDNIIHLVLAKDPDAKPGTAGISCLVVPKFWVNEDGSMGAWNDVTTTGIEHKLGIHGSATCSLAFGENDNCYGWMIGDGPVDGRGQGMAQMFQMMNEERINTGIFSLGAFGAAYYAALEYSKARVQSKKSTDPKGPSVRIIEHEDVRRMLLLQKSVMEACRALLYSSYYYIDMSKEAATEEEREYAEDMFMIQNPLCKAYVSDMAWVMCAEAIQVHGGYGFMEEYAPASLARDCKIYTLWEGTNFIQSQDFTGRKFTMKKGEPFKKWLAEIGDFIANKKTPEFAAEFAMMEKAFAAFNSIIDMNAAWTTTNKQLKQLFATRIMHAAARVICGKLMLDQGLLAAGKLAELGDSHFDANFYKGKLASVKFYVMNVVPEIFGTEEAMKAADTSAIDCPEEAIM.

Residue E451 is the Proton acceptor of the active site.

This sequence belongs to the acyl-CoA dehydrogenase family. FAD is required as a cofactor.

Its subcellular location is the cytoplasm. The catalysed reaction is butanoyl-CoA + oxidized [electron-transfer flavoprotein] + H(+) = (2E)-butenoyl-CoA + reduced [electron-transfer flavoprotein]. It catalyses the reaction a short-chain 2,3-saturated fatty acyl-CoA + oxidized [electron-transfer flavoprotein] + H(+) = a short-chain (2E)-enoyl-CoA + reduced [electron-transfer flavoprotein]. It functions in the pathway lipid metabolism; butanoate metabolism. Functionally, involved in syntrophic growth of S.wolfei with butyrate, as part of the butyrate oxidation pathway. Catalyzes the oxidation of butanoyl-CoA to crotonyl-CoA. Probably passes the electrons released by this reaction on to electron-transfer flavoproteins (EtfAB) to finally generate hydrogen and/or formate. The polypeptide is Butyryl-CoA dehydrogenase Swol_2052 (Syntrophomonas wolfei subsp. wolfei (strain DSM 2245B / Goettingen)).